Reading from the N-terminus, the 643-residue chain is MRPRKAWMLVLLLALVQLLAVASAGAPDEDSTDKEDAIEEDEEEDEDDDDDDDDLEVKEENGVLILNDANFDNFVADKDTVLLEFYAPWCGHCKQFAPEYEKIAATLKENDPPIPVAKIDATSESALASRFDVSGYPTIKILKKGQEVDYEGSRTQEEIVAKVKEVSQPNWTPPPEVTLVLTKDNFDEVVNDADIILVEFYAPWCGHCKKLAPEYEKAAKELSKSSPPIPLAKVDAIAETDLAKRFDVSSYPTLKIFRKGKAFSYNGPREKYGIVDYMMEQSGPPSKQILALKQVQEFLKDGDDVIIIGVFKSESDPAYQLYQDAANSLREDYKFHHTFSTEIAKFLKVSLGKLVVMQPEKFQSKYEPKSYVMDIKDSTEAAAITEHVVKHTLPLVGHRKAADAKRYTRRPLVVVYYSVDFSFDYRAATQFWRNKVLEVAKDFPEYTFAVADEEDFATELKDLGLSESGEEVNAAILDEGGRRFAMEPDDFDADALRDFVTAFKKGKLKPVIKSQPVPKNNKGPVKVVVGKTFDSIVMDPKKDVLIEFYAPWCGHCKQLEPVYTSLGKKYKGHKNLVIAKMDATANDVTSDRYKVEGFPTIYFAPSGDKKKPIKFEDGNRDLEHLSKFIEEHATKLSRTKEEL.

The first 20 residues, 1–20 (MRPRKAWMLVLLLALVQLLA), serve as a signal peptide directing secretion. 2 consecutive Thioredoxin domains span residues 21-168 (VASA…EVSQ) and 170-300 (NWTP…EFLK). Positions 24-54 (AGAPDEDSTDKEDAIEEDEEEDEDDDDDDDD) are disordered. Over residues 27–54 (PDEDSTDKEDAIEEDEEEDEDDDDDDDD) the composition is skewed to acidic residues. The CXXC signature appears at 90–93 (CGHC). Cystine bridges form between C90–C93 and C205–C208. Residue K365 is modified to N6-acetyllysine. The Thioredoxin 3 domain maps to 503–634 (FKKGKLKPVI…LSKFIEEHAT (132 aa)). The CXXC motif lies at 553–556 (CGHC). The cysteines at positions 553 and 556 are disulfide-linked. Positions 640–643 (KEEL) match the Prevents secretion from ER motif.

It belongs to the protein disulfide isomerase family. Part of a large chaperone multiprotein complex comprising DNAJB11, HSP90B1, HSPA5, HYOU, PDIA2, PDIA4, PDIA6, PPIB, SDF2L1, UGGT1 and very small amounts of ERP29, but not, or at very low levels, CALR nor CANX. Component of a complex containing at least CRELD2, MANF, MATN3 and PDIA4.

The protein localises to the endoplasmic reticulum lumen. The protein resides in the melanosome. It catalyses the reaction Catalyzes the rearrangement of -S-S- bonds in proteins.. This chain is Protein disulfide-isomerase A4 (PDIA4), found in Bos taurus (Bovine).